The chain runs to 466 residues: Ribulose bisphosphate carboxylase large chain (466 aa).

Lysine 5 is modified (N6,N6,N6-trimethyllysine). Substrate is bound by residues asparagine 114 and threonine 164. The active-site Proton acceptor is the lysine 166. Lysine 168 is a binding site for substrate. Residues lysine 192, aspartate 194, and glutamate 195 each coordinate Mg(2+). Residue lysine 192 is modified to N6-carboxylysine. Histidine 285 acts as the Proton acceptor in catalysis. Residues arginine 286, histidine 318, and serine 370 each coordinate substrate.

This sequence belongs to the RuBisCO large chain family. Type I subfamily. In terms of assembly, heterohexadecamer of 8 large chains and 8 small chains; disulfide-linked. The disulfide link is formed within the large subunit homodimers. Requires Mg(2+) as cofactor. In terms of processing, the disulfide bond which can form in the large chain dimeric partners within the hexadecamer appears to be associated with oxidative stress and protein turnover.

The protein resides in the plastid. The protein localises to the chloroplast. It catalyses the reaction 2 (2R)-3-phosphoglycerate + 2 H(+) = D-ribulose 1,5-bisphosphate + CO2 + H2O. The enzyme catalyses D-ribulose 1,5-bisphosphate + O2 = 2-phosphoglycolate + (2R)-3-phosphoglycerate + 2 H(+). Its function is as follows. RuBisCO catalyzes two reactions: the carboxylation of D-ribulose 1,5-bisphosphate, the primary event in carbon dioxide fixation, as well as the oxidative fragmentation of the pentose substrate in the photorespiration process. Both reactions occur simultaneously and in competition at the same active site. The protein is Ribulose bisphosphate carboxylase large chain of Drosophyllum lusitanicum (Portuguese sundew).